The chain runs to 69 residues: Fumarase D (69 aa).

The protein belongs to the FumD family.

It catalyses the reaction (S)-malate = fumarate + H2O. Functionally, in vitro catalyzes the addition of water to fumarate, forming malate. Cannot catalyze the reverse reaction. Cannot use the cis-isomer maleate as substrate. The sequence is that of Fumarase D from Shigella flexneri.